The following is a 910-amino-acid chain: Leucine--tRNA ligase (910 aa).

Positions 42 to 52 (PYPSGKLHMGH) match the 'HIGH' region motif. Residues 658–662 (TMSKS) carry the 'KMSKS' region motif. Lys-661 provides a ligand contact to ATP.

It belongs to the class-I aminoacyl-tRNA synthetase family.

It is found in the cytoplasm. The catalysed reaction is tRNA(Leu) + L-leucine + ATP = L-leucyl-tRNA(Leu) + AMP + diphosphate. The sequence is that of Leucine--tRNA ligase from Acidovorax ebreus (strain TPSY) (Diaphorobacter sp. (strain TPSY)).